The primary structure comprises 147 residues: Lysozyme C-1 (147 aa).

The first 18 residues, 1–18 (MKALIILGFLFLSVAVQG), serve as a signal peptide directing secretion. Residues 19–147 (KVFERCELAR…VSSYVEGCTL (129 aa)) enclose the C-type lysozyme domain. Cystine bridges form between C24–C145, C48–C133, C83–C99, and C95–C113. Residues E53 and D71 contribute to the active site.

Belongs to the glycosyl hydrolase 22 family. As to quaternary structure, monomer. As to expression, stomach-specific.

The enzyme catalyses Hydrolysis of (1-&gt;4)-beta-linkages between N-acetylmuramic acid and N-acetyl-D-glucosamine residues in a peptidoglycan and between N-acetyl-D-glucosamine residues in chitodextrins.. In terms of biological role, lysozymes have primarily a bacteriolytic function; those in tissues and body fluids are associated with the monocyte-macrophage system and enhance the activity of immunoagents. The polypeptide is Lysozyme C-1 (LYZ1) (Bos taurus (Bovine)).